The chain runs to 238 residues: Ribonuclease PH (238 aa).

Residues arginine 86 and 124–126 (GTR) each bind phosphate.

The protein belongs to the RNase PH family. Homohexameric ring arranged as a trimer of dimers.

It catalyses the reaction tRNA(n+1) + phosphate = tRNA(n) + a ribonucleoside 5'-diphosphate. Phosphorolytic 3'-5' exoribonuclease that plays an important role in tRNA 3'-end maturation. Removes nucleotide residues following the 3'-CCA terminus of tRNAs; can also add nucleotides to the ends of RNA molecules by using nucleoside diphosphates as substrates, but this may not be physiologically important. Probably plays a role in initiation of 16S rRNA degradation (leading to ribosome degradation) during starvation. The chain is Ribonuclease PH from Salmonella choleraesuis (strain SC-B67).